A 349-amino-acid polypeptide reads, in one-letter code: MTVELPSTQRALVFDTWNGPLEVRQVPVPSPADDEILVKIEYSGICHSDLHVWLGDLKDMSVCPLVGGHEGAGSVVQIGKNVTGWQLGDKAGVKLMNFNCLNCEFCKKGHEPLCHHIQNYGFDRSGTFQEYLTIRGVDAAKINKDTNLAAAAPILCAGVTVYKALKESNVAPGQIIVLTGAGGGLGSLAIQYACAMGMRVVAMDHGSKEAHCKGLGAEWFVDAFETPDIVSHITKLTEGGPHGVINFAVARKPMEQAVEYVRKRGTVVFVGLPKDSKVTFDTTPFIFNAITIKGSIVGSRLDVDEAMEFVTRGIVKVPLELVKLEDVPAVYQRMLDGKINSRAVVDFSL.

Zn(2+)-binding residues include C46, H69, C100, C103, C106, C114, and C156. NAD(+) contacts are provided by residues 180–186, D204, K208, 270–272, and R342; these read GAGGGLG and VGL.

The protein belongs to the zinc-containing alcohol dehydrogenase family. Homotetramer. Requires Zn(2+) as cofactor.

The catalysed reaction is a primary alcohol + NAD(+) = an aldehyde + NADH + H(+). The enzyme catalyses a secondary alcohol + NAD(+) = a ketone + NADH + H(+). The sequence is that of Alcohol dehydrogenase 1 from Caenorhabditis elegans.